The primary structure comprises 361 residues: G-protein coupled receptor 52 (361 aa).

Residues 1-44 (MNDSRWTEWRILNTSSGILNVSERHSCPLGFGHYSAVDVCIFET) are Extracellular-facing. Residues asparagine 2, asparagine 13, and asparagine 20 are each glycosylated (N-linked (GlcNAc...) asparagine). Residues 45-65 (IVIVLLTFLIIAGNLTVIFVF) traverse the membrane as a helical segment. The Cytoplasmic portion of the chain corresponds to 66–87 (HCAPLLHHYTTSYFIQTMAYAD). A helical transmembrane segment spans residues 88–108 (LFVGVSCLVPTLSLLHYSTGI). Residues 109-115 (HESLTCQ) lie on the Extracellular side of the membrane. A disulfide bridge links cysteine 114 with cysteine 193. Residues 116-136 (VFGYIISVLKSVSMACLACIS) traverse the membrane as a helical segment. Topologically, residues 137-159 (VDRYLAITKPLSYNQLVTPCRLR) are cytoplasmic. A helical membrane pass occupies residues 160–180 (ICIILIWIYSCLIFLPSFFGW). The Extracellular segment spans residues 181-200 (GKPGYHGDIFEWCATSWLTS). Residues 201 to 221 (AYFTGFIVCLLYAPAALVVCF) form a helical membrane-spanning segment. At 222–265 (TYFHIFKICRQHTKEINDRRARFPSHEAAASRDAGHSPDRRYAM) the chain is on the cytoplasmic side. A helical transmembrane segment spans residues 266 to 286 (VLFRITSVFYMLWLPYIIYFL). Residues 287-296 (LESSRVLDNP) lie on the Extracellular side of the membrane. The chain crosses the membrane as a helical span at residues 297-317 (TLSFLTTWLAISNSFCNCVIY). Residues 318 to 361 (SLSNSVFRLGLRRLSETMCTSCMCVKDKEARDPKPRKRANSCSI) lie on the Cytoplasmic side of the membrane.

Belongs to the G-protein coupled receptor 1 family.

Its subcellular location is the cell membrane. Functionally, G- protein coupled receptor activated by antipsychotics reserpine leading to an increase in intracellular cAMP and its internalization. May play a role in locomotor activity through modulation of dopamine, NMDA and ADORA2A-induced locomotor activity. These behavioral changes are accompanied by modulation of the dopamine receptor signaling pathway in striatum. Modulates HTT level via cAMP-dependent but PKA independent mechanisms throught activation of RAB39B that translocates HTT to the endoplasmic reticulum, thus avoiding proteasome degradation. The sequence is that of G-protein coupled receptor 52 from Bos taurus (Bovine).